A 479-amino-acid polypeptide reads, in one-letter code: Cruciferin PGCRURSE5 (479 aa).

The signal sequence occupies residues 1–23; that stretch reads MVKLAHLLVATFGVLLVLNGCLA. Intrachain disulfides connect Cys-37-Cys-70 and Cys-113-Cys-296. The region spanning 42–241 is the Cupin type-1 1 domain; sequence LDVLQPTETI…ALKMQLRLAQ (200 aa). A Phosphothreonine modification is found at Thr-116. Disordered regions lie at residues 117–144, 196–219, and 271–291; these read FMDS…GFRD, RTFR…QQQN, and YESE…DNGL. Positions 124 to 141 are enriched in low complexity; the sequence is QGQGQQGQQGQQGQQQQG. A Cupin type-1 2 domain is found at 302-451; it reads ENIDDPARAD…AFQISLEEAR (150 aa). Thr-415 and Thr-440 each carry phosphothreonine.

This sequence belongs to the 11S seed storage protein (globulins) family. Hexamer; each subunit is composed of an acidic and a basic chain derived from a single precursor and linked by a disulfide bond.

Its function is as follows. This is a seed storage protein. This chain is Cruciferin PGCRURSE5 (CRURS), found in Raphanus sativus (Radish).